The sequence spans 767 residues: MGNGERGRPNKKMKYGGKDDQKMKNIQNAEDYYDDADEDSRDGEGEEKKRDFTKLELKPDHGNRPLWACADGRIFLETFSPLYKQAYDFLIAIAEPVCRPESMHEYNLTPHSLYAAVSVGLETETIISVLNKLSKTKLPKEMIEFIHASTANYGKVKLVLKKNRYFIESPFPEVLKRLLSDDVINRARFSSEPYYGGDGFSVGRTCGELEAGPGELLNEAEFAAAAEEKETHSFEIDPAQVENVKQRCLPNALNYPMLEEYDFRNDNVNPDLDMELKPHAQPRPYQEKSLSKMFGNGRARSGIIVLPCGAGKSLVGVSAAARIKKSCLCLATNAVSVDQWAFQFKLWSTIRDDQICRFTSDSKERFRGNAGVVVTTYNMVAFGGKRSEESEKIIEEMRNREWGLLLMDEVHVVPAHMFRKVISITKSHCKLGLTATLVREDERITDLNFLIGPKLYEANWLDLVKGGFIANVQCAEVWCPMTKEFFAEYLKKENSKKKQALYVMNPNKFRACEFLIRFHEQQRGDKIIVFADNLFALTEYAMKLRKPMIYGATSHIERTKILEAFKTSKDVNTVFLSKVGDNSIDIPEANVIIQISSHAGSRRQEAQRLGRILRAKGKLEDRMAGGKEEYNAFFYSLVSTDTQEMYYSTKRQQFLIDQGYSFKVITSLPPPDAGSSLSYHSQEEQLSLLGKVMNAGDDLVGLEQLEEDTDGMALQKARRSMGSMSVMSGSKGMVYMEYNSGRHKSGQQFKKPKDPTKRHNLFKKRYV.

The disordered stretch occupies residues 1 to 51 (MGNGERGRPNKKMKYGGKDDQKMKNIQNAEDYYDDADEDSRDGEGEEKKRD). Acidic residues predominate over residues 31–41 (DYYDDADEDSR). Positions 42–51 (DGEGEEKKRD) are enriched in basic and acidic residues. A Helicase ATP-binding domain is found at 293–455 (MFGNGRARSG…DLNFLIGPKL (163 aa)). 306-313 (LPCGAGKS) contributes to the ATP binding site. The DEVH box motif lies at 408–411 (DEVH). The Helicase C-terminal domain occupies 510 to 676 (RACEFLIRFH…SLPPPDAGSS (167 aa)). The tract at residues 742-767 (RHKSGQQFKKPKDPTKRHNLFKKRYV) is disordered. The Nuclear localization signal motif lies at 750–766 (KKPKDPTKRHNLFKKRY). The segment covering 758 to 767 (RHNLFKKRYV) has biased composition (basic residues).

It belongs to the helicase family. RAD25/XPB subfamily. In terms of assembly, component of the 7-subunit TFIIH core complex composed of XPB, XPD, TFB1/GTF2H1, GTF2H2/P44, TFB4/GTF2H3, TFB2/GTF2H4 and TFB5/GTF2H5, which is active in NER. The core complex associates with the 3-subunit CDK-activating kinase (CAK) module composed of CYCH1/cyclin H1, CDKD and MAT1/At4g30820 to form the 10-subunit holoenzyme (holo-TFIIH) active in transcription. Expressed ubiquitously.

Its subcellular location is the nucleus. It carries out the reaction Couples ATP hydrolysis with the unwinding of duplex DNA by translocating in the 3'-5' direction.. The catalysed reaction is ATP + H2O = ADP + phosphate + H(+). Functionally, ATP-dependent 3'-5' DNA helicase/translocase; binds dsDNA rather than ssDNA, unzipping it in a translocase rather than classical helicase activity. Component of the general transcription and DNA repair factor IIH (TFIIH) core complex. When complexed to CDK-activating kinase (CAK), involved in RNA transcription by RNA polymerase II. The ATPase activity of XPB/ERCC3, but not its helicase activity, is required for DNA opening; it may wrap around the damaged DNA wedging it open, causing localized melting and twisting that allows XPD/ERCC2 helicase to anchor. The ATP-dependent helicase activity of XPB/ERCC3 may be required for promoter escape. Also involved in transcription-coupled nucleotide excision repair (NER) of damaged DNA. In NER, TFIIH acts by opening DNA around the lesion to allow the excision of the damaged oligonucleotide and its replacement by a new DNA fragment. The structure of the TFIIH transcription complex differs from the NER-TFIIH complex. Partially complements UV sensitivity of a yeast SSL2 mutation. Required during the early stages of development, including seed germination. This Arabidopsis thaliana (Mouse-ear cress) protein is General transcription and DNA repair factor IIH helicase/translocase subunit XPB1 (XPB1).